Reading from the N-terminus, the 262-residue chain is Adenosylcobinamide-GDP ribazoletransferase (262 aa).

A run of 8 helical transmembrane segments spans residues 4–21, 37–57, 62–82, 112–132, 141–161, 181–201, 202–222, and 236–256; these read AWSGFLLSVQFLTVIPIR, AFPLVGALIGVIEAVTYFIFS, LSPLFLALSLMWLSIWIAGGL, VGAFAVLSILCLLSFRFLFVF, IFLISVIPLLSRTAMAWLLIY, YDAHVAMIIGNCLLACLCAIH, FSVWKTVIFLACGTIFAVFVA, and DALGAFVEGVETWLWCMIWLL.

The protein belongs to the CobS family. Mg(2+) serves as cofactor.

It is found in the cell membrane. It catalyses the reaction alpha-ribazole + adenosylcob(III)inamide-GDP = adenosylcob(III)alamin + GMP + H(+). The enzyme catalyses alpha-ribazole 5'-phosphate + adenosylcob(III)inamide-GDP = adenosylcob(III)alamin 5'-phosphate + GMP + H(+). Its pathway is cofactor biosynthesis; adenosylcobalamin biosynthesis; adenosylcobalamin from cob(II)yrinate a,c-diamide: step 7/7. In terms of biological role, joins adenosylcobinamide-GDP and alpha-ribazole to generate adenosylcobalamin (Ado-cobalamin). Also synthesizes adenosylcobalamin 5'-phosphate from adenosylcobinamide-GDP and alpha-ribazole 5'-phosphate. This chain is Adenosylcobinamide-GDP ribazoletransferase, found in Geobacillus sp. (strain WCH70).